The chain runs to 144 residues: Transcription antitermination protein NusB (144 aa).

This sequence belongs to the NusB family.

Functionally, involved in transcription antitermination. Required for transcription of ribosomal RNA (rRNA) genes. Binds specifically to the boxA antiterminator sequence of the ribosomal RNA (rrn) operons. This Dictyoglomus thermophilum (strain ATCC 35947 / DSM 3960 / H-6-12) protein is Transcription antitermination protein NusB.